Consider the following 341-residue polypeptide: L-threonine 3-dehydrogenase (341 aa).

C38 is a binding site for Zn(2+). Residues T40 and H43 each act as charge relay system in the active site. Positions 63, 64, 93, 96, 99, and 107 each coordinate Zn(2+). NAD(+) is bound by residues I175, D195, R200, 262–264, and 286–287; these read LGI and IY.

This sequence belongs to the zinc-containing alcohol dehydrogenase family. Homotetramer. Requires Zn(2+) as cofactor.

The protein resides in the cytoplasm. It carries out the reaction L-threonine + NAD(+) = (2S)-2-amino-3-oxobutanoate + NADH + H(+). It participates in amino-acid degradation; L-threonine degradation via oxydo-reductase pathway; glycine from L-threonine: step 1/2. In terms of biological role, catalyzes the NAD(+)-dependent oxidation of L-threonine to 2-amino-3-ketobutyrate. The sequence is that of L-threonine 3-dehydrogenase from Salmonella choleraesuis (strain SC-B67).